Reading from the N-terminus, the 228-residue chain is Putative N-acetylmannosamine-6-phosphate 2-epimerase (228 aa).

The protein belongs to the NanE family.

It catalyses the reaction an N-acyl-D-glucosamine 6-phosphate = an N-acyl-D-mannosamine 6-phosphate. It participates in amino-sugar metabolism; N-acetylneuraminate degradation; D-fructose 6-phosphate from N-acetylneuraminate: step 3/5. In terms of biological role, converts N-acetylmannosamine-6-phosphate (ManNAc-6-P) to N-acetylglucosamine-6-phosphate (GlcNAc-6-P). This chain is Putative N-acetylmannosamine-6-phosphate 2-epimerase, found in Mycoplasmopsis pulmonis (strain UAB CTIP) (Mycoplasma pulmonis).